The following is a 953-amino-acid chain: Zinc finger protein 507 (953 aa).

S95 is modified (phosphoserine). 3 consecutive C2H2-type zinc fingers follow at residues 125-147, 155-185, and 248-270; these read YQCS…IKQH, LMCS…ANIH, and YRCL…AWKH. A Phosphoserine modification is found at S427. The disordered stretch occupies residues 470 to 489; the sequence is KGLATDENAPPGRRRTNSES. 5 C2H2-type zinc fingers span residues 641–663, 669–691, 697–720, 758–780, and 786–808; these read YRCR…LRVH, YQCP…MIHH, YQCK…REQH, YRCD…RRIH, and YRCS…MWKH. A disordered region spans residues 831–888; the sequence is GRVLGKSPGKTQLKSSEESADPVTGSSENAVSSSELMSQTPSEVLGTNENEKLSPTSN. Over residues 854–888 the composition is skewed to polar residues; it reads TGSSENAVSSSELMSQTPSEVLGTNENEKLSPTSN. A C2H2-type 9 zinc finger spans residues 911–933; that stretch reads FCCCICGFESTSKENLLDHMKEH.

The protein belongs to the krueppel C2H2-type zinc-finger protein family.

It is found in the nucleus. Its function is as follows. May be involved in transcriptional regulation. This Homo sapiens (Human) protein is Zinc finger protein 507 (ZNF507).